The chain runs to 154 residues: 6,7-dimethyl-8-ribityllumazine synthase (154 aa).

5-amino-6-(D-ribitylamino)uracil-binding positions include F21, 55 to 57, and 79 to 81; these read AFE and CVI. 84–85 provides a ligand contact to (2S)-2-hydroxy-3-oxobutyl phosphate; it reads AT. H87 serves as the catalytic Proton donor. F112 serves as a coordination point for 5-amino-6-(D-ribitylamino)uracil. R126 is a (2S)-2-hydroxy-3-oxobutyl phosphate binding site.

The protein belongs to the DMRL synthase family. As to quaternary structure, forms an icosahedral capsid composed of 60 subunits, arranged as a dodecamer of pentamers.

It catalyses the reaction (2S)-2-hydroxy-3-oxobutyl phosphate + 5-amino-6-(D-ribitylamino)uracil = 6,7-dimethyl-8-(1-D-ribityl)lumazine + phosphate + 2 H2O + H(+). Its pathway is cofactor biosynthesis; riboflavin biosynthesis; riboflavin from 2-hydroxy-3-oxobutyl phosphate and 5-amino-6-(D-ribitylamino)uracil: step 1/2. Functionally, catalyzes the formation of 6,7-dimethyl-8-ribityllumazine by condensation of 5-amino-6-(D-ribitylamino)uracil with 3,4-dihydroxy-2-butanone 4-phosphate. This is the penultimate step in the biosynthesis of riboflavin. In Staphylococcus aureus (strain Mu50 / ATCC 700699), this protein is 6,7-dimethyl-8-ribityllumazine synthase.